The chain runs to 620 residues: 1-deoxy-D-xylulose-5-phosphate synthase (620 aa).

Thiamine diphosphate contacts are provided by residues H80 and 121-123 (GHS). D152 serves as a coordination point for Mg(2+). Thiamine diphosphate contacts are provided by residues 153–154 (GA), N181, Y288, and E370. N181 contributes to the Mg(2+) binding site.

It belongs to the transketolase family. DXPS subfamily. As to quaternary structure, homodimer. The cofactor is Mg(2+). Thiamine diphosphate serves as cofactor.

The catalysed reaction is D-glyceraldehyde 3-phosphate + pyruvate + H(+) = 1-deoxy-D-xylulose 5-phosphate + CO2. It participates in metabolic intermediate biosynthesis; 1-deoxy-D-xylulose 5-phosphate biosynthesis; 1-deoxy-D-xylulose 5-phosphate from D-glyceraldehyde 3-phosphate and pyruvate: step 1/1. In terms of biological role, catalyzes the acyloin condensation reaction between C atoms 2 and 3 of pyruvate and glyceraldehyde 3-phosphate to yield 1-deoxy-D-xylulose-5-phosphate (DXP). This Escherichia coli O127:H6 (strain E2348/69 / EPEC) protein is 1-deoxy-D-xylulose-5-phosphate synthase.